Consider the following 261-residue polypeptide: Putative carbamate hydrolase RutD (261 aa).

An AB hydrolase-1 domain is found at Pro14 to Pro119.

The protein belongs to the AB hydrolase superfamily. Hydrolase RutD family.

The enzyme catalyses carbamate + 2 H(+) = NH4(+) + CO2. Involved in pyrimidine catabolism. May facilitate the hydrolysis of carbamate, a reaction that can also occur spontaneously. This chain is Putative carbamate hydrolase RutD, found in Agrobacterium fabrum (strain C58 / ATCC 33970) (Agrobacterium tumefaciens (strain C58)).